Reading from the N-terminus, the 468-residue chain is UDP-N-acetylmuramate--L-alanine ligase (468 aa).

118–124 contributes to the ATP binding site; the sequence is GTHGKTT.

Belongs to the MurCDEF family.

Its subcellular location is the cytoplasm. The enzyme catalyses UDP-N-acetyl-alpha-D-muramate + L-alanine + ATP = UDP-N-acetyl-alpha-D-muramoyl-L-alanine + ADP + phosphate + H(+). Its pathway is cell wall biogenesis; peptidoglycan biosynthesis. Functionally, cell wall formation. The sequence is that of UDP-N-acetylmuramate--L-alanine ligase from Roseobacter denitrificans (strain ATCC 33942 / OCh 114) (Erythrobacter sp. (strain OCh 114)).